We begin with the raw amino-acid sequence, 476 residues long: MADSKEGVLPLTAASTAPISFGFTRTSARRRLADSGDGAGPSPEEKDFLKTVEGRELQSVKPQEAPKELVIPLIQNGHRRQPPARPPGPSTDTGALADGVVSQAVKELIAESKKSLEERENAGVDPTLAIPMIQKGCTPSGEGADSEPRAETVPEEANYEAVPVEAYGLAMLRGMGWKPGEGIGRTFNQVVKPRVNSLRPKGLGLGANLTEAQALTPTGPSRMPRPDEEQEKDKEDQPQGLVPGGAVVVLSGPHRGLYGKVEGLDPDNVRAMVRLAVGSRVVTVSEYYLRPVSQQEFDKNTLDLRQQNGTASSRKTLWNQELYIQQDNSERKRKHLPDRQDGPAAKSEKAAPRSQHWLHRDLRVRFVDNMYKGGQYYNTKMIIEDVLSPDTCVCRTDEGRVLEGLREDMLETLVPKAEGDRVMVVLGPQTGRVGHLLSRDRARSRALVQLPRENQVVELHYDAICQYMGPSDTDDD.

A disordered region spans residues 1 to 96; it reads MADSKEGVLP…PGPSTDTGAL (96 aa). At Ala2 the chain carries N-acetylalanine. Residue Lys5 forms a Glycyl lysine isopeptide (Lys-Gly) (interchain with G-Cter in SUMO2) linkage. Polar residues predominate over residues 13 to 26; sequence AASTAPISFGFTRT. At Ser27 the chain carries Phosphoserine; by PKA. Phosphoserine occurs at positions 35 and 42. The span at 43–58 shows a compositional bias: basic and acidic residues; sequence PEEKDFLKTVEGRELQ. Phosphoserine is present on Ser115. In terms of domain architecture, G-patch spans 164-210; sequence VEAYGLAMLRGMGWKPGEGIGRTFNQVVKPRVNSLRPKGLGLGANLT. A disordered region spans residues 203–244; it reads LGLGANLTEAQALTPTGPSRMPRPDEEQEKDKEDQPQGLVPG. Over residues 210 to 219 the composition is skewed to polar residues; that stretch reads TEAQALTPTG. Phosphothreonine is present on Thr216. Over residues 224 to 237 the composition is skewed to basic and acidic residues; that stretch reads PRPDEEQEKDKEDQ. In terms of domain architecture, KOW 1 spans 240 to 267; it reads GLVPGGAVVVLSGPHRGLYGKVEGLDPD. Position 316 is a phosphothreonine; by PKA (Thr316). Residues 327–353 form a disordered region; that stretch reads DNSERKRKHLPDRQDGPAAKSEKAAPR. Positions 337–351 are enriched in basic and acidic residues; sequence PDRQDGPAAKSEKAA. One can recognise a KOW 2 domain in the interval 415–442; that stretch reads PKAEGDRVMVVLGPQTGRVGHLLSRDRA. Ser471 is modified (phosphoserine). At Thr473 the chain carries Phosphothreonine.

It belongs to the MOS2 family. As to quaternary structure, component of the minor spliceosome, which splices U12-type introns. Interacts with PRKX. Interacts with DHX16. Interacts with PRKACB. Post-translationally, phosphorylation regulates its ability to bind RNA.

It localises to the nucleus. RNA-binding protein involved in pre-mRNA splicing. As a component of the minor spliceosome, involved in the splicing of U12-type introns in pre-mRNAs. The chain is G-patch domain and KOW motifs-containing protein (GPKOW) from Homo sapiens (Human).